The sequence spans 78 residues: Large ribosomal subunit protein bL28 (78 aa).

Positions 1–20 are disordered; it reads MSRVCQVTGKRPVTGNNRSH.

Belongs to the bacterial ribosomal protein bL28 family.

This is Large ribosomal subunit protein bL28 from Vibrio parahaemolyticus serotype O3:K6 (strain RIMD 2210633).